We begin with the raw amino-acid sequence, 461 residues long: Phosphomethylpyrimidine synthase (461 aa).

Substrate is bound by residues Asn81, Met110, Tyr140, His176, 196 to 198, 237 to 240, and Glu276; these read SRG and DSLR. A Zn(2+)-binding site is contributed by His280. A substrate-binding site is contributed by Tyr303. His344 contacts Zn(2+). Residues Cys424, Cys427, and Cys432 each contribute to the [4Fe-4S] cluster site.

This sequence belongs to the ThiC family. Requires [4Fe-4S] cluster as cofactor.

It catalyses the reaction 5-amino-1-(5-phospho-beta-D-ribosyl)imidazole + S-adenosyl-L-methionine = 4-amino-2-methyl-5-(phosphooxymethyl)pyrimidine + CO + 5'-deoxyadenosine + formate + L-methionine + 3 H(+). It functions in the pathway cofactor biosynthesis; thiamine diphosphate biosynthesis. Functionally, catalyzes the synthesis of the hydroxymethylpyrimidine phosphate (HMP-P) moiety of thiamine from aminoimidazole ribotide (AIR) in a radical S-adenosyl-L-methionine (SAM)-dependent reaction. In Thermosynechococcus vestitus (strain NIES-2133 / IAM M-273 / BP-1), this protein is Phosphomethylpyrimidine synthase.